Reading from the N-terminus, the 134-residue chain is Auxin-responsive protein SAUR40 (134 aa).

It belongs to the ARG7 family. As to quaternary structure, interacts with and inhibits PP2C-D subfamily of type 2C phosphatases such as PP2C67/PP2C-D1.

It is found in the cytoplasm. In terms of biological role, provide a mechanistic link between auxin and plasma membrane H(+)-ATPases (PM H(+)-ATPases, e.g. AHA1 and AHA2), and triggers PM H(+)-ATPases activity by promoting phosphorylation of their C-terminal autoinhibitory domain as a result of PP2C-D subfamily of type 2C phosphatases inhibition, thus leading to the acidification of the apoplast and the facilitation of solutes and water uptake to drive cell expansion. Plays a role in the regulation of cell expansion, root meristem patterning and auxin transport. The protein is Auxin-responsive protein SAUR40 of Arabidopsis thaliana (Mouse-ear cress).